The chain runs to 160 residues: Transcription elongation factor GreA (160 aa).

Residues 10 to 37 (TLEGKAKLENELQELKTVKRKEVVERIK) are a coiled coil.

The protein belongs to the GreA/GreB family.

Necessary for efficient RNA polymerase transcription elongation past template-encoded arresting sites. The arresting sites in DNA have the property of trapping a certain fraction of elongating RNA polymerases that pass through, resulting in locked ternary complexes. Cleavage of the nascent transcript by cleavage factors such as GreA or GreB allows the resumption of elongation from the new 3'terminus. GreA releases sequences of 2 to 3 nucleotides. This is Transcription elongation factor GreA from Listeria welshimeri serovar 6b (strain ATCC 35897 / DSM 20650 / CCUG 15529 / CIP 8149 / NCTC 11857 / SLCC 5334 / V8).